The following is a 440-amino-acid chain: 6-phospho-alpha-glucosidase (440 aa).

4-70 (FSVVIAGGGS…PEIEFSYTTD (67 aa)) contributes to the NAD(+) binding site. Substrate-binding residues include Arg93 and Asn147. Mn(2+) is bound at residue Cys169. Asp170 serves as the catalytic Proton donor. His200 contacts Mn(2+). The active-site Proton acceptor is Tyr263. Position 283 (Arg283) interacts with substrate.

As to quaternary structure, homodimer. It depends on NAD(+) as a cofactor. Requires Mn(2+) as cofactor. The cofactor is Co(2+). Ni(2+) serves as cofactor.

The enzyme catalyses alpha-maltose 6'-phosphate + H2O = D-glucose 6-phosphate + D-glucose. It participates in glycan biosynthesis; sucrose metabolism. Its function is as follows. Is involved in the catabolism of alpha-glycosides accumulated via a phosphoenolpyruvate-dependent phosphotransferase system (PEP-PTS). Hydrolyzes a wide variety of 6-phospho-alpha-D-glucosides including maltose-6'-phosphate, isomaltose-6'-phosphate, maltitol-6-phosphate, trehalose-6-phosphate and the 6'-phosphorylated derivatives of the five linkage-isomeric alpha-D-glucosyl-D-fructoses: trehalulose-6'-phosphate, turanose-6'-phosphate, maltulose-6'-phosphate, leucrose-6'-phosphate, and palatinose-6'-phosphate. However, sucrose-6-phosphate is not a substrate for this enzyme. This chain is 6-phospho-alpha-glucosidase, found in Klebsiella pneumoniae.